A 40-amino-acid polypeptide reads, in one-letter code: Small polypeptide DEVIL 3 (40 aa).

Residues 9-40 (PCNKKLGGYLKEQKGRLYIIRRCVVMLICWHD) form a required for DVL/RTFL small polypeptide activity region. A helical transmembrane segment spans residues 12–28 (KKLGGYLKEQKGRLYII).

Belongs to the DVL/RTFL small polypeptides family. As to expression, mostly expressed in flowers and stems, and, to a lower extent, in roots and leaves.

Its subcellular location is the cell membrane. Small polypeptide acting as a regulatory molecule which coordinates cellular responses required for differentiation, growth and development, including leaves shape, pedicule elongation, inflorescence organization and fruit maturation, probably by restricting polar cell proliferation in lateral organs and coordinating socket cell recruitment and differentiation at trichome sites. This is Small polypeptide DEVIL 3 from Arabidopsis thaliana (Mouse-ear cress).